The following is a 158-amino-acid chain: Protein Smg homolog (158 aa).

The protein belongs to the Smg family.

This is Protein Smg homolog from Vibrio atlanticus (strain LGP32) (Vibrio splendidus (strain Mel32)).